A 119-amino-acid chain; its full sequence is Glucitol operon activator protein (119 aa).

Positions 23-29 form a DNA-binding region, H-T-H motif; the sequence is QISRFNR.

Positive regulator for glucitol operon expression. In Escherichia coli (strain K12), this protein is Glucitol operon activator protein (gutM).